The chain runs to 453 residues: tRNA modification GTPase MnmE (453 aa).

3 residues coordinate (6S)-5-formyl-5,6,7,8-tetrahydrofolate: arginine 22, glutamate 79, and lysine 119. The TrmE-type G domain occupies 215-376; sequence GMKVVIAGRP…LKQHLKSLMG (162 aa). Residue asparagine 225 participates in K(+) binding. GTP-binding positions include 225–230, 244–250, 269–272, and 334–337; these read NAGKSS, TEIAGTT, DTAG, and NKAD. Residue serine 229 participates in Mg(2+) binding. K(+)-binding residues include threonine 244, isoleucine 246, and threonine 249. Threonine 250 is a binding site for Mg(2+). Lysine 453 contacts (6S)-5-formyl-5,6,7,8-tetrahydrofolate.

Belongs to the TRAFAC class TrmE-Era-EngA-EngB-Septin-like GTPase superfamily. TrmE GTPase family. As to quaternary structure, homodimer. Heterotetramer of two MnmE and two MnmG subunits. K(+) serves as cofactor.

It localises to the cytoplasm. In terms of biological role, exhibits a very high intrinsic GTPase hydrolysis rate. Involved in the addition of a carboxymethylaminomethyl (cmnm) group at the wobble position (U34) of certain tRNAs, forming tRNA-cmnm(5)s(2)U34. The chain is tRNA modification GTPase MnmE from Shewanella pealeana (strain ATCC 700345 / ANG-SQ1).